The chain runs to 427 residues: MENTEQEHNLPEGDETQWPNGVKRKRKNSQCSMNSTSDKSISVPGYVPSYLEKDEPCVVCGDKATGYHYRCITCEGCKGFFRRTIQKNLHPSYSCKYDSCCIIDKITRNQCQLCRFRKCISVGMAMDLVLDDSKRVAKRRLIEENREKRKKEEIVKTLHNRPEPTVSEWELIRMVTEAHRHTNAQGPHWKQKRKFLPEDIGQSPAPTSDNDKVDLEAFSEFTKIITPAITRVVDFAKKLPMFSELPCEDQIILLKGCCMEIMSLRAAVRYDPESETLTLSGEMAVSREQLKNGGLGVVSDAIFDLGKSLSQFNLDDSEVALLQAVLLMSSDRSGLTCVEKIEKCQEMYLLAFEHYINHRKHNISHFWPKLLMKVTNLRMIGACHASRFLHMKVECPTELFPPLFLEVFEDQEGSTGVAAQEDGSCLR.

The segment covering 1–11 (MENTEQEHNLP) has biased composition (basic and acidic residues). The segment at 1 to 40 (MENTEQEHNLPEGDETQWPNGVKRKRKNSQCSMNSTSDKS) is disordered. The segment at 1 to 56 (MENTEQEHNLPEGDETQWPNGVKRKRKNSQCSMNSTSDKSISVPGYVPSYLEKDEP) is modulating. Residues 29–40 (SQCSMNSTSDKS) show a composition bias toward polar residues. 2 consecutive NR C4-type zinc fingers follow at residues 57–77 (CVVC…CEGC) and 95–119 (CKYD…FRKC). Residues 57–131 (CVVCGDKATG…VGMAMDLVLD (75 aa)) constitute a DNA-binding region (nuclear receptor). The NR LBD domain maps to 167 to 410 (SEWELIRMVT…PPLFLEVFED (244 aa)).

The protein belongs to the nuclear hormone receptor family. NR1 subfamily. In terms of assembly, interacts with ncoa2. In terms of tissue distribution, after the mid-blastula transition (MBT), expressed throughout the deep cells, which give rise to the embryo proper. In adults, isoform 2 shows highest expression in the eye and liver. Expressed in adult gonads.

Its subcellular location is the nucleus. Its function is as follows. High affinity receptor for triiodothyronine. In the absence of thyroid hormone during late blastula stage development, acts as a transcriptional repressor. Whereas in the presence of thyroid hormone, can act as an activator of transcription. In addition, represses retinoic acid (RA)-signaling during blastula and gastrula stages of development. This is Thyroid hormone receptor alpha-A (thraa) from Danio rerio (Zebrafish).